Here is a 571-residue protein sequence, read N- to C-terminus: MEDYSNLSLKSIPKRTCRIIFRTATILGICTLIVLCSSILHEIIHLDVSSGLMDSDDSQQGIIQPIIESLKSLIALANQILYNVAIIIPLKIDSIETVIFSALKDMHTGSMSNTNCTPGNLLLHDAAYINGINKFLVLKSYNGTPKYGPLLNIPSFIPSATSPNGCTRIPSFSLIKTHWCYTHNVMLGDCLDFTTSNQYLAMGIIQQSAAAFPIFRTMKTIYLSDGINRKSCSVTAIPGGCVLYCYVATRSEKEDYATTDLAELRLAFYYYNDTFIERVISLPNTTGQWATINPAVGSGIYHLGFILFPVYGGLISGTPSYNKQSSRYFIPKHPNITCAGNSSEQAAAARSSYVIRYHSNRLIQSAVLICPLSDMHTARCNLVMFNNSQVMMGAEGRLYVIDNNLYYYQRSSSWWSASLFYRINTDFSKGIPPIIEAQWVPSYQVPRPGVMPCNATSFCPANCITGVYADVWPLNDPEPTSQNALNPNYRFAGAFLRNESNRTNPTFYTASASALLNTTGFNNTNHKAAYTSSTCFKNTGTQKIYCLIIIEMGSSLLGEFQIIPFLRELIP.

The Intravirion portion of the chain corresponds to 1 to 25; that stretch reads MEDYSNLSLKSIPKRTCRIIFRTAT. A helical membrane pass occupies residues 26–46; it reads ILGICTLIVLCSSILHEIIHL. Over 47-571 the chain is Virion surface; it reads DVSSGLMDSD…IIPFLRELIP (525 aa). Intrachain disulfides connect Cys166/Cys190, Cys180/Cys241, and Cys232/Cys245. The important for neuraminidase activity stretch occupies residues 228–233; the sequence is NRKSCS. Positions 228-233 are involved in neuraminidase activity; sequence NRKSCS. N-linked (GlcNAc...) asparagine; by host glycans are attached at residues Asn272, Asn284, Asn335, and Asn341. 3 cysteine pairs are disulfide-bonded: Cys338–Cys459, Cys370–Cys380, and Cys453–Cys463. A glycan (N-linked (GlcNAc...) asparagine; by host) is linked at Asn386. Positions 393–398 are sialic receptor-binding site; the sequence is GAEGRL. Asn454, Asn498, Asn501, Asn517, and Asn522 each carry an N-linked (GlcNAc...) asparagine; by host glycan. Residues Cys535 and Cys546 are joined by a disulfide bond.

It belongs to the paramyxoviruses hemagglutinin-neuraminidase family. In terms of assembly, homotetramer; composed of disulfide-linked homodimers. Interacts with F protein trimer.

The protein localises to the virion membrane. It is found in the host cell membrane. The catalysed reaction is Hydrolysis of alpha-(2-&gt;3)-, alpha-(2-&gt;6)-, alpha-(2-&gt;8)- glycosidic linkages of terminal sialic acid residues in oligosaccharides, glycoproteins, glycolipids, colominic acid and synthetic substrates.. Attaches the virus to sialic acid-containing cell receptors and thereby initiating infection. Binding of HN protein to the receptor induces a conformational change that allows the F protein to trigger virion/cell membranes fusion. In terms of biological role, neuraminidase activity ensures the efficient spread of the virus by dissociating the mature virions from the neuraminic acid containing glycoproteins. This chain is Hemagglutinin-neuraminidase (HN), found in Human parainfluenza 2 virus (strain Toshiba) (HPIV-2).